The primary structure comprises 267 residues: Phosphate import ATP-binding protein PstB (267 aa).

Positions 21-262 (VAARNLDFYY…PSKQQTEDYI (242 aa)) constitute an ABC transporter domain. ATP is bound at residue 53-60 (GPSGCGKS).

This sequence belongs to the ABC transporter superfamily. Phosphate importer (TC 3.A.1.7) family. In terms of assembly, the complex is composed of two ATP-binding proteins (PstB), two transmembrane proteins (PstC and PstA) and a solute-binding protein (PstS).

The protein localises to the cell inner membrane. It carries out the reaction phosphate(out) + ATP + H2O = ADP + 2 phosphate(in) + H(+). Its function is as follows. Part of the ABC transporter complex PstSACB involved in phosphate import. Responsible for energy coupling to the transport system. In Xanthomonas axonopodis pv. citri (strain 306), this protein is Phosphate import ATP-binding protein PstB.